The chain runs to 79 residues: Sec-independent protein translocase protein TatA (79 aa).

Residues 1-21 (MGGWSSPSHWLIILLIVVLLF) form a helical membrane-spanning segment. Residues 52–61 (KNTQKIEENK) are compositionally biased toward basic and acidic residues. Residues 52–79 (KNTQKIEENKNTTNNTSADASIDKTKKA) are disordered.

Belongs to the TatA/E family. As to quaternary structure, the Tat system comprises two distinct complexes: a TatABC complex, containing multiple copies of TatA, TatB and TatC subunits, and a separate TatA complex, containing only TatA subunits. Substrates initially bind to the TatABC complex, which probably triggers association of the separate TatA complex to form the active translocon.

It localises to the cell inner membrane. Part of the twin-arginine translocation (Tat) system that transports large folded proteins containing a characteristic twin-arginine motif in their signal peptide across membranes. TatA could form the protein-conducting channel of the Tat system. This chain is Sec-independent protein translocase protein TatA, found in Campylobacter jejuni subsp. jejuni serotype O:6 (strain 81116 / NCTC 11828).